A 129-amino-acid polypeptide reads, in one-letter code: Small ribosomal subunit protein uS11 (129 aa).

This sequence belongs to the universal ribosomal protein uS11 family. As to quaternary structure, part of the 30S ribosomal subunit. Interacts with proteins S7 and S18. Binds to IF-3.

Located on the platform of the 30S subunit, it bridges several disparate RNA helices of the 16S rRNA. Forms part of the Shine-Dalgarno cleft in the 70S ribosome. The chain is Small ribosomal subunit protein uS11 from Methylorubrum populi (strain ATCC BAA-705 / NCIMB 13946 / BJ001) (Methylobacterium populi).